We begin with the raw amino-acid sequence, 302 residues long: MFSRLSRSHSKALPIALGTVAIAAATAFYFANRNQHSFVFNESNKVFKGDDKWIDLPISKIEEESHDTRRFTFKLPTEDSEMGLVLASALFAKFVTPKGSNVVRPYTPVSDLSQKGHFQLVVKHYEGGKMTSHLFGLKPNDTVSFKGPIMKWKWQPNQFKSITLLGAGTGINPLYQLAHHIVENPNDKTKVNLLYGNKTPQDILLRKELDALKEKYPDKFNVTYFVDDKQDDQDFDGEIGFISKDFIQEHVPGPKESTHLFVCGPPPFMNAYSGEKKSPKDQGELIGILNNLGYSKDQVFKF.

The propeptide at 1-41 is removed in mature form; it reads MFSRLSRSHSKALPIALGTVAIAAATAFYFANRNQHSFVFN. A helical membrane pass occupies residues 12–32; the sequence is ALPIALGTVAIAAATAFYFAN. One can recognise an FAD-binding FR-type domain in the interval 51–155; the sequence is DKWIDLPISK…KGPIMKWKWQ (105 aa). 158 to 193 contacts FAD; sequence QFKSITLLGAGTGINPLYQLAHHIVENPNDKTKVNL. Serine 278 bears the Phosphoserine mark.

It belongs to the flavoprotein pyridine nucleotide cytochrome reductase family. It depends on FAD as a cofactor. Post-translationally, there are two isoforms of NADH-cytochrome b5 reductase, a 34 kDa form (p34) and a 32 kDa form (p32). The p34 form becomes firmly anchored to the outer mitochondrial membrane after an incomplete translocation arrest. The p32 form is formed after translocation of the p34 precursor to the inner mitochondrial membrane, where it is processed by mitochondrial inner membrane peptidase (IMP) complex and released to the intermembrane space.

It localises to the mitochondrion intermembrane space. The protein localises to the mitochondrion outer membrane. It carries out the reaction 2 Fe(III)-[cytochrome b5] + NADH = 2 Fe(II)-[cytochrome b5] + NAD(+) + H(+). Functionally, the outer membrane form may mediate the reduction of outer membrane cytochrome b5, and the soluble inter-membrane space form may transfer electrons from external NADH to cytochrome c, thereby mediating an antimycin-insensitive, energy-coupled oxidation of external NADH by yeast mitochondria. Involved in the reduction of D-erythroascorbyl free radicals. This is NADH-cytochrome b5 reductase 2 (MCR1) from Saccharomyces cerevisiae (strain YJM789) (Baker's yeast).